The following is a 521-amino-acid chain: Amidase (521 aa).

Catalysis depends on charge relay system residues Lys-96 and Ser-171. The tract at residues 155–174 (SGPVRNPWDRQREAGGSSGG) is disordered. Ser-195 (acyl-ester intermediate) is an active-site residue.

This sequence belongs to the amidase family. As to quaternary structure, homodimer.

It catalyses the reaction a monocarboxylic acid amide + H2O = a monocarboxylate + NH4(+). Hydrolyzes propionamides efficiently, and also at a lower efficiency, acetamide, acrylamide and indoleacetamide. This enzyme seems to be stereospecific and can lead to the production of a single enantiomer. The protein is Amidase (amdA) of Rhodococcus erythropolis (Arthrobacter picolinophilus).